A 48-amino-acid chain; its full sequence is Large ribosomal subunit protein eL40 (48 aa).

It belongs to the eukaryotic ribosomal protein eL40 family.

The polypeptide is Large ribosomal subunit protein eL40 (Methanobrevibacter smithii (strain ATCC 35061 / DSM 861 / OCM 144 / PS)).